The following is a 257-amino-acid chain: tRNA uridine(34) hydroxylase (257 aa).

In terms of domain architecture, Rhodanese spans 128-222 (NGRRLVMLDA…YFEQVGGEGY (95 aa)). Cys-182 functions as the Cysteine persulfide intermediate in the catalytic mechanism.

It belongs to the TrhO family.

The catalysed reaction is uridine(34) in tRNA + AH2 + O2 = 5-hydroxyuridine(34) in tRNA + A + H2O. Catalyzes oxygen-dependent 5-hydroxyuridine (ho5U) modification at position 34 in tRNAs. The chain is tRNA uridine(34) hydroxylase from Xylella fastidiosa (strain M23).